We begin with the raw amino-acid sequence, 403 residues long: Ubiquitin-like modifier-activating enzyme 5 (403 aa).

Residues Gly-81, Asp-102, Lys-125, Asn-148, and Asn-182 each contribute to the ATP site. Zn(2+) contacts are provided by Cys-224 and Cys-227. Cys-248 functions as the Glycyl thioester intermediate in the catalytic mechanism. 2 residues coordinate Zn(2+): Cys-301 and Cys-306. The segment covering 306 to 315 has biased composition (basic and acidic residues); the sequence is CRKQQEEYKK. The interval 306–337 is disordered; sequence CRKQQEEYKKRAPAQPTQETAPQEEEEVVHED. The short motif at 333–345 is the UFM1-interacting sequence (UIS) element; that stretch reads VVHEDNEWGIELV. The linker stretch occupies residues 346-376; the sequence is SEVSEEELKNSSGPVPTLPEGITVAYTVPKK. A phosphoserine mark is found at Ser-357 and Ser-392. The UFC1-binding sequence (UFC) signature appears at 388 to 403; sequence DSGESLEDLMARMKKM.

It belongs to the ubiquitin-activating E1 family. UBA5 subfamily. As to quaternary structure, homodimer; homodimerization is required for UFM1 activation. Interacts (via UIS motif) with UFM1; binds UFM1 via a trans-binding mechanism in which UFM1 interacts with distinct sites in both subunits of the UBA5 homodimer. Interacts (via C-terminus) with UFC1. Interacts (via UIS motif) with GABARAPL2 and, with lower affinity, with GABARAP and GABARAPL1.

The protein resides in the cytoplasm. The protein localises to the nucleus. It localises to the endoplasmic reticulum membrane. It is found in the golgi apparatus. In terms of biological role, E1-like enzyme which specifically catalyzes the first step in ufmylation. Activates UFM1 by first adenylating its C-terminal glycine residue with ATP, and thereafter linking this residue to the side chain of a cysteine residue in E1, yielding a UFM1-E1 thioester and free AMP. Activates UFM1 via a trans-binding mechanism, in which UFM1 interacts with distinct sites in both subunits of the UBA5 homodimer. Trans-binding also promotes stabilization of the UBA5 homodimer, and enhances ATP-binding. Transfer of UFM1 from UBA5 to the E2-like enzyme UFC1 also takes place using a trans mechanism. Ufmylation plays a key role in various processes, such as ribosome recycling, response to DNA damage, interferon response or reticulophagy (also called ER-phagy). Ufmylation is essential for erythroid differentiation of both megakaryocytes and erythrocytes. The polypeptide is Ubiquitin-like modifier-activating enzyme 5 (Rattus norvegicus (Rat)).